The sequence spans 197 residues: Holliday junction branch migration complex subunit RuvA (197 aa).

Residues 1 to 63 (MFDYIKGQLT…EDAHLLFGFH (63 aa)) form a domain I region. Positions 64-142 (TENEKDVFLK…TIPEGGQAQQ (79 aa)) are domain II. The segment at 142–146 (QMPKA) is flexible linker. Residues 147 to 197 (KGNQQLDEAIEALLALGYKATELKKIRAFFEGTDDTAEQYIKSALKMLMKG) form a domain III region.

It belongs to the RuvA family. In terms of assembly, homotetramer. Forms an RuvA(8)-RuvB(12)-Holliday junction (HJ) complex. HJ DNA is sandwiched between 2 RuvA tetramers; dsDNA enters through RuvA and exits via RuvB. An RuvB hexamer assembles on each DNA strand where it exits the tetramer. Each RuvB hexamer is contacted by two RuvA subunits (via domain III) on 2 adjacent RuvB subunits; this complex drives branch migration. In the full resolvosome a probable DNA-RuvA(4)-RuvB(12)-RuvC(2) complex forms which resolves the HJ.

It is found in the cytoplasm. In terms of biological role, the RuvA-RuvB-RuvC complex processes Holliday junction (HJ) DNA during genetic recombination and DNA repair, while the RuvA-RuvB complex plays an important role in the rescue of blocked DNA replication forks via replication fork reversal (RFR). RuvA specifically binds to HJ cruciform DNA, conferring on it an open structure. The RuvB hexamer acts as an ATP-dependent pump, pulling dsDNA into and through the RuvAB complex. HJ branch migration allows RuvC to scan DNA until it finds its consensus sequence, where it cleaves and resolves the cruciform DNA. In Streptococcus uberis (strain ATCC BAA-854 / 0140J), this protein is Holliday junction branch migration complex subunit RuvA.